A 208-amino-acid polypeptide reads, in one-letter code: GTP-binding protein Rho1 (208 aa).

Residue 19–26 (GDGACGKT) coordinates GTP. Positions 41–49 (YVPTVFDNY) match the Effector region motif. GTP-binding positions include 66-70 (DTAGQ) and 124-127 (CKAD). Residues 188–208 (GKQGKSKPKTKSSKKKKCVVL) are disordered. Positions 191-208 (GKSKPKTKSSKKKKCVVL) are enriched in basic residues. At cysteine 205 the chain carries Cysteine methyl ester. Cysteine 205 carries the S-geranylgeranyl cysteine lipid modification. The propeptide at 206-208 (VVL) is removed in mature form.

Belongs to the small GTPase superfamily. Rho family.

It is found in the cell membrane. The chain is GTP-binding protein Rho1 (RHO1) from Kluyveromyces lactis (strain ATCC 8585 / CBS 2359 / DSM 70799 / NBRC 1267 / NRRL Y-1140 / WM37) (Yeast).